The primary structure comprises 527 residues: MWTRRWIQFLVLCLHLWVTVEGYLGVFRGDVNETITLSCNNVTELTAWFKDNNSGVVLACDGENSSDGRFSRINGSSLVITMLQIQDEGNYSCSKCSEDKSSQAYIQLKVSSGPYNVLADISPTRTLPNGTIYTSVGSNLSFGCSSNSYPAPDLEIVLQRTDANPEPFPSIKGNNFLQFNLINVASNYQGNYTCSAVNPLSGRKLNSTRQLLVYRPPITSIKCYANNSLGFSKMLLSCSWPGGYPDPLLQWEQDGKIIANESFAANTKDTLVTYLNSSSLRVRQQFQCSGKHLSTKENNMKTCQIQIDLPLLESQPMRTCFTGENVTLSCSVSGAVPSATITWLRNISDPESDIQPGKKYLISQKDSLSYLTILNCSHEEDEGYYTCKAENVLGIKEINVWLTVNKPHNIVGLVTALLLLFLLVVAIITGTVLYCDPQIYLKANPFRSGATDVLVLVDSEDEENEEVFDTAESVQYTDIVPNVPPPAANGHLSKHEVMFHRPPESTSSDLFSEVSDDTGEENQNEEI.

The N-terminal stretch at 1-13 is a signal peptide; the sequence is MWTRRWIQFLVLC. Ig-like C2-type domains follow at residues 14-111, 123-212, 216-306, and 310-399; these read LHLW…LKVS, PTRT…RQLL, PPIT…CQIQ, and PLLE…KEIN. Over 23-409 the chain is Extracellular; that stretch reads YLGVFRGDVN…VWLTVNKPHN (387 aa). Residues asparagine 32, asparagine 41, asparagine 52, asparagine 64, asparagine 74, asparagine 90, asparagine 129, asparagine 139, asparagine 191, asparagine 206, asparagine 226, asparagine 260, asparagine 276, asparagine 325, asparagine 346, and asparagine 375 are each glycosylated (N-linked (GlcNAc...) asparagine). A disulfide bond links cysteine 144 and cysteine 194. The cysteines at positions 238 and 288 are disulfide-linked. Cysteine 330 and cysteine 387 are oxidised to a cystine. The chain crosses the membrane as a helical span at residues 410–430; the sequence is IVGLVTALLLLFLLVVAIITG. Residues 431–527 are Cytoplasmic-facing; that stretch reads TVLYCDPQIY…TGEENQNEEI (97 aa). The tract at residues 501–527 is disordered; that stretch reads RPPESTSSDLFSEVSDDTGEENQNEEI. A compositionally biased stretch (acidic residues) spans 514–527; that stretch reads VSDDTGEENQNEEI.

The protein localises to the membrane. The polypeptide is V-set and immunoglobulin domain-containing protein 10 (vsig10) (Xenopus laevis (African clawed frog)).